The primary structure comprises 445 residues: Scarecrow-like protein 18 (445 aa).

Low complexity predominate over residues 1 to 21 (MLTSFKSSSSSSEDATATTTE). The tract at residues 1–26 (MLTSFKSSSSSSEDATATTTENPPPL) is disordered. The GRAS domain occupies 32-445 (SAATSASHHL…RPLFSVSSWK (414 aa)). A leucine repeat I (LRI) region spans residues 39–127 (HHLRRLLFTA…STVFTSSVCK (89 aa)). The segment at 146–217 (YLWLNQLTPF…SPPPSLRITG (72 aa)) is VHIID. Positions 179 to 183 (LHILD) match the VHIID motif. The tract at residues 227–259 (RTGDRLTRFADSLGLQFQFHTLVIVEEDLAGLL) is leucine repeat II (LRII). The segment at 275 to 366 (IAVNCVHFLH…QRWFGKEILD (92 aa)) is PFYRE. The tract at residues 369–445 (AAEETERKQR…RPLFSVSSWK (77 aa)) is SAW.

This sequence belongs to the GRAS family. As to expression, expressed in roots and flowers.

The protein resides in the nucleus. In terms of biological role, probable transcription factor required for axillary (lateral) shoot meristem formation during vegetative development. Seems to act upstream of REVOLUTA. This chain is Scarecrow-like protein 18 (SCL18), found in Arabidopsis thaliana (Mouse-ear cress).